The following is a 720-amino-acid chain: MSMFNVHRKEITWGGRKLVLETGKVARQADGAVMVTYGETSVLCTVVGAKSQKPGIDFFPLTVNYQEKAFAAGKIPGGFFKREGRPSEKETLVSRLIDRPIRPLFADGFRNEVQVVCTVLSHDLENDPDIAALVGTSAALTISGLPFMGPVGAARVGYVDGAYVLNPLVGDLPKSELDLVVAGTVEGVLMVESEAKQLSEDVMLGAVMFGHREFQAVIQAIIDLAEECAKDPWDLPEPPAEVAVVTGKFNDAGVPAELAEAYKIIKKQDRYAAVGAVKKKALALLTEAAEIAVAGGILKHLEADVVRGNILKTGVRIDGRDTKTVRAIEVEVGVLPRAHGSALFTRGETQALVVATLGTGQDEQIIDQLAGEYREHFMLHYNFPPYSVGEAGRMGSPGRREIGHGKLAWRAMRPCLPAKESFPYTMRVVSEITESNGSSSMASVCGSSLALMDAGVPLPKPVAGIAMGLIKEGTDFAVLSDILGDEDHLGDMDFKVAGTVDGVTALQMDIKITSITEEIMKIALGQAKDGRIHILGEMNKGLDHARDSVSGNAPRITTISIPKEKIREVIGTGGKVIREICEQTGAKIDIDDDGTIKVASVDADAAQRAIDWIRGIVAEPELGVIYNGKVVKVVDFGAFVNFLGSRDGLVHISELARERVAKTADVVKQGDVVKVKVLGFDDRGKVKLSMKQVDQTTGEDISAQLEAERAASKRERHHED.

Positions 487 and 493 each coordinate Mg(2+). Residues 554–613 enclose the KH domain; the sequence is PRITTISIPKEKIREVIGTGGKVIREICEQTGAKIDIDDDGTIKVASVDADAAQRAIDWI. The region spanning 623–691 is the S1 motif domain; the sequence is GVIYNGKVVK…DRGKVKLSMK (69 aa). The segment at 695–720 is disordered; the sequence is QTTGEDISAQLEAERAASKRERHHED. Basic and acidic residues predominate over residues 706 to 720; it reads EAERAASKRERHHED.

It belongs to the polyribonucleotide nucleotidyltransferase family. Mg(2+) is required as a cofactor.

The protein localises to the cytoplasm. The enzyme catalyses RNA(n+1) + phosphate = RNA(n) + a ribonucleoside 5'-diphosphate. In terms of biological role, involved in mRNA degradation. Catalyzes the phosphorolysis of single-stranded polyribonucleotides processively in the 3'- to 5'-direction. The protein is Polyribonucleotide nucleotidyltransferase of Paramagnetospirillum magneticum (strain ATCC 700264 / AMB-1) (Magnetospirillum magneticum).